A 214-amino-acid chain; its full sequence is Urease accessory protein UreF (214 aa).

This sequence belongs to the UreF family. In terms of assembly, ureD, UreF and UreG form a complex that acts as a GTP-hydrolysis-dependent molecular chaperone, activating the urease apoprotein by helping to assemble the nickel containing metallocenter of UreC. The UreE protein probably delivers the nickel.

It localises to the cytoplasm. In terms of biological role, required for maturation of urease via the functional incorporation of the urease nickel metallocenter. The chain is Urease accessory protein UreF from Ruegeria sp. (strain TM1040) (Silicibacter sp.).